Reading from the N-terminus, the 404-residue chain is Formate-dependent phosphoribosylglycinamide formyltransferase (404 aa).

Residues 25–26 (EL) and glutamate 85 contribute to the N(1)-(5-phospho-beta-D-ribosyl)glycinamide site. ATP is bound by residues arginine 118, lysine 159, 164–169 (SSGKGQ), 199–202 (EGFV), and glutamate 207. In terms of domain architecture, ATP-grasp spans 123–318 (RLAAEELGLP…EFELHARAIL (196 aa)). Glutamate 277 and glutamate 289 together coordinate Mg(2+). Residues aspartate 296, lysine 365, and 372–373 (RR) each bind N(1)-(5-phospho-beta-D-ribosyl)glycinamide.

It belongs to the PurK/PurT family. In terms of assembly, homodimer.

The enzyme catalyses N(1)-(5-phospho-beta-D-ribosyl)glycinamide + formate + ATP = N(2)-formyl-N(1)-(5-phospho-beta-D-ribosyl)glycinamide + ADP + phosphate + H(+). The protein operates within purine metabolism; IMP biosynthesis via de novo pathway; N(2)-formyl-N(1)-(5-phospho-D-ribosyl)glycinamide from N(1)-(5-phospho-D-ribosyl)glycinamide (formate route): step 1/1. Its function is as follows. Involved in the de novo purine biosynthesis. Catalyzes the transfer of formate to 5-phospho-ribosyl-glycinamide (GAR), producing 5-phospho-ribosyl-N-formylglycinamide (FGAR). Formate is provided by PurU via hydrolysis of 10-formyl-tetrahydrofolate. The chain is Formate-dependent phosphoribosylglycinamide formyltransferase from Burkholderia thailandensis (strain ATCC 700388 / DSM 13276 / CCUG 48851 / CIP 106301 / E264).